The primary structure comprises 914 residues: Valine--tRNA ligase (914 aa).

The 'HIGH' region motif lies at 45 to 55; it reads PNVTGSLHMGH. The 'KMSKS' region motif lies at 538–542; that stretch reads KMSKS. Lysine 541 is a binding site for ATP. The stretch at 847 to 914 forms a coiled coil; that stretch reads LVDLDALKGR…LARKRLADLS (68 aa).

This sequence belongs to the class-I aminoacyl-tRNA synthetase family. ValS type 1 subfamily. As to quaternary structure, monomer.

Its subcellular location is the cytoplasm. It catalyses the reaction tRNA(Val) + L-valine + ATP = L-valyl-tRNA(Val) + AMP + diphosphate. Its function is as follows. Catalyzes the attachment of valine to tRNA(Val). As ValRS can inadvertently accommodate and process structurally similar amino acids such as threonine, to avoid such errors, it has a 'posttransfer' editing activity that hydrolyzes mischarged Thr-tRNA(Val) in a tRNA-dependent manner. The protein is Valine--tRNA ligase of Parasynechococcus marenigrum (strain WH8102).